The following is a 126-amino-acid chain: Histone H2B type 1-N (126 aa).

Over residues 1 to 12 (MPEPSKSAPAPK) the composition is skewed to low complexity. Positions 1-36 (MPEPSKSAPAPKKGSKKAVTKAQKKDGKKRKRSRKE) are disordered. P2 bears the N-acetylproline mark. At E3 the chain carries ADP-ribosyl glutamic acid. Position 6 is an N6-(2-hydroxyisobutyryl)lysine; alternate (K6). An N6-(beta-hydroxybutyryl)lysine; alternate modification is found at K6. The residue at position 6 (K6) is an N6-acetyllysine; alternate. Residue K6 is modified to N6-butyryllysine; alternate. K6 is subject to N6-crotonyllysine; alternate. K6 is modified (N6-lactoyllysine; alternate). K6 participates in a covalent cross-link: Glycyl lysine isopeptide (Lys-Gly) (interchain with G-Cter in SUMO2); alternate. An ADP-ribosylserine modification is found at S7. K12 is subject to N6-(beta-hydroxybutyryl)lysine; alternate. 2 positions are modified to N6-acetyllysine; alternate: K12 and K13. N6-crotonyllysine; alternate is present on residues K12 and K13. At K12 the chain carries N6-lactoyllysine; alternate. K13 is modified (N6-(2-hydroxyisobutyryl)lysine; alternate). S15 bears the Phosphoserine; by STK4/MST1 mark. 4 positions are modified to N6-acetyllysine; alternate: K16, K17, K21, and K24. An N6-crotonyllysine; alternate mark is found at K16, K17, K21, and K24. Residues K16, K17, K21, and K24 each carry the N6-lactoyllysine; alternate modification. N6-(beta-hydroxybutyryl)lysine; alternate occurs at positions 17 and 21. Residue K17 is modified to N6-glutaryllysine; alternate. N6-(2-hydroxyisobutyryl)lysine; alternate occurs at positions 21 and 24. N6-butyryllysine; alternate is present on K21. A Glycyl lysine isopeptide (Lys-Gly) (interchain with G-Cter in SUMO2); alternate cross-link involves residue K21. K25 carries the N6-(2-hydroxyisobutyryl)lysine modification. The residue at position 35 (K35) is an N6-(2-hydroxyisobutyryl)lysine; alternate. The residue at position 35 (K35) is an N6-(beta-hydroxybutyryl)lysine; alternate. K35 carries the post-translational modification N6-crotonyllysine; alternate. K35 is modified (N6-glutaryllysine; alternate). K35 is modified (N6-succinyllysine; alternate). A Glycyl lysine isopeptide (Lys-Gly) (interchain with G-Cter in ubiquitin); alternate cross-link involves residue K35. E36 is modified (polyADP-ribosyl glutamic acid). S37 carries the post-translational modification Phosphoserine; by AMPK. Residues K44, K47, and K58 each carry the N6-(2-hydroxyisobutyryl)lysine; alternate modification. The residue at position 44 (K44) is an N6-lactoyllysine; alternate. 2 positions are modified to N6-glutaryllysine; alternate: K44 and K47. N6-methyllysine; alternate is present on K47. Position 58 is an N6,N6-dimethyllysine; alternate (K58). Position 80 is a dimethylated arginine (R80). Residue K86 is modified to N6-(2-hydroxyisobutyryl)lysine; alternate. N6-(beta-hydroxybutyryl)lysine; alternate is present on K86. K86 carries the N6-acetyllysine; alternate modification. At K86 the chain carries N6-lactoyllysine; alternate. Position 86 is an N6,N6,N6-trimethyllysine; alternate (K86). An omega-N-methylarginine mark is found at R87 and R93. An N6-(2-hydroxyisobutyryl)lysine; alternate modification is found at K109. Position 109 is an N6-lactoyllysine; alternate (K109). Position 109 is an N6-glutaryllysine; alternate (K109). K109 is modified (N6-methyllysine; alternate). S113 carries O-linked (GlcNAc) serine glycosylation. Phosphothreonine is present on T116. Residues K117 and K121 each carry the N6-(2-hydroxyisobutyryl)lysine; alternate modification. K117 and K121 each carry N6-(beta-hydroxybutyryl)lysine; alternate. Residues K117 and K121 each carry the N6-lactoyllysine; alternate modification. K117 and K121 each carry N6-glutaryllysine; alternate. K117 and K121 each carry N6-succinyllysine; alternate. Residue K117 is modified to N6-malonyllysine; alternate. K117 carries the N6-methylated lysine; alternate modification. Residue K121 forms a Glycyl lysine isopeptide (Lys-Gly) (interchain with G-Cter in ubiquitin); alternate linkage.

The protein belongs to the histone H2B family. The nucleosome is a histone octamer containing two molecules each of H2A, H2B, H3 and H4 assembled in one H3-H4 heterotetramer and two H2A-H2B heterodimers. The octamer wraps approximately 147 bp of DNA. Monoubiquitination at Lys-35 (H2BK34Ub) by the MSL1/MSL2 dimer is required for histone H3 'Lys-4' (H3K4me) and 'Lys-79' (H3K79me) methylation and transcription activation at specific gene loci, such as HOXA9 and MEIS1 loci. Similarly, monoubiquitination at Lys-121 (H2BK120Ub) by the RNF20/40 complex gives a specific tag for epigenetic transcriptional activation and is also prerequisite for histone H3 'Lys-4' and 'Lys-79' methylation. It also functions cooperatively with the FACT dimer to stimulate elongation by RNA polymerase II. H2BK120Ub also acts as a regulator of mRNA splicing: deubiquitination by USP49 is required for efficient cotranscriptional splicing of a large set of exons. Post-translationally, phosphorylation at Ser-37 (H2BS36ph) by AMPK in response to stress promotes transcription. Phosphorylated on Ser-15 (H2BS14ph) by STK4/MST1 during apoptosis; which facilitates apoptotic chromatin condensation. Also phosphorylated on Ser-15 in response to DNA double strand breaks (DSBs), and in correlation with somatic hypermutation and immunoglobulin class-switch recombination. In terms of processing, glcNAcylation at Ser-113 promotes monoubiquitination of Lys-121. It fluctuates in response to extracellular glucose, and associates with transcribed genes. ADP-ribosylated by PARP1 or PARP2 on Ser-7 (H2BS6ADPr) in response to DNA damage. H2BS6ADPr promotes recruitment of CHD1L. Mono-ADP-ribosylated on Glu-3 (H2BE2ADPr) by PARP3 in response to single-strand breaks. Poly ADP-ribosylation on Glu-36 (H2BE35ADPr) by PARP1 regulates adipogenesis: it inhibits phosphorylation at Ser-37 (H2BS36ph), thereby blocking expression of pro-adipogenetic genes. Post-translationally, crotonylation (Kcr) is specifically present in male germ cells and marks testis-specific genes in post-meiotic cells, including X-linked genes that escape sex chromosome inactivation in haploid cells. Crotonylation marks active promoters and enhancers and confers resistance to transcriptional repressors. It is also associated with post-meiotically activated genes on autosomes. In terms of processing, lactylated in macrophages by EP300/P300 by using lactoyl-CoA directly derived from endogenous or exogenous lactate, leading to stimulates gene transcription.

The protein resides in the nucleus. It localises to the chromosome. Its function is as follows. Core component of nucleosome. Nucleosomes wrap and compact DNA into chromatin, limiting DNA accessibility to the cellular machineries which require DNA as a template. Histones thereby play a central role in transcription regulation, DNA repair, DNA replication and chromosomal stability. DNA accessibility is regulated via a complex set of post-translational modifications of histones, also called histone code, and nucleosome remodeling. This is Histone H2B type 1-N from Homo sapiens (Human).